Consider the following 389-residue polypeptide: Lipid-A-disaccharide synthase (389 aa).

The protein belongs to the LpxB family.

The catalysed reaction is a lipid X + a UDP-2-N,3-O-bis[(3R)-3-hydroxyacyl]-alpha-D-glucosamine = a lipid A disaccharide + UDP + H(+). It participates in bacterial outer membrane biogenesis; LPS lipid A biosynthesis. Condensation of UDP-2,3-diacylglucosamine and 2,3-diacylglucosamine-1-phosphate to form lipid A disaccharide, a precursor of lipid A, a phosphorylated glycolipid that anchors the lipopolysaccharide to the outer membrane of the cell. The chain is Lipid-A-disaccharide synthase from Paraburkholderia xenovorans (strain LB400).